The primary structure comprises 566 residues: Glucose-6-phosphate isomerase (566 aa).

The active-site Proton donor is glutamate 374. Residues histidine 405 and lysine 529 contribute to the active site.

This sequence belongs to the GPI family.

The protein localises to the cytoplasm. It carries out the reaction alpha-D-glucose 6-phosphate = beta-D-fructose 6-phosphate. It participates in carbohydrate biosynthesis; gluconeogenesis. The protein operates within carbohydrate degradation; glycolysis; D-glyceraldehyde 3-phosphate and glycerone phosphate from D-glucose: step 2/4. Catalyzes the reversible isomerization of glucose-6-phosphate to fructose-6-phosphate. The protein is Glucose-6-phosphate isomerase of Bifidobacterium longum (strain NCC 2705).